A 2564-amino-acid polypeptide reads, in one-letter code: Histone-lysine N-methyltransferase SETD2 (2564 aa).

Residues 1 to 11 are compositionally biased toward pro residues; it reads MKQLQPQPPPK. The disordered stretch occupies residues 1–30; the sequence is MKQLQPQPPPKMGDFYDPEHPTPEEEENEA. Residues 17 to 30 show a composition bias toward basic and acidic residues; it reads DPEHPTPEEEENEA. Ser131 is subject to Phosphoserine. Disordered regions lie at residues 180–211, 272–561, and 607–626; these read STTV…VTEP, NEQA…TLSK, and PERE…DSPT. The segment covering 187 to 197 has biased composition (pro residues); it reads PSSPPPPPPPA. The span at 198–207 shows a compositional bias: low complexity; the sequence is QATTLSSPAP. Residues 278 to 290 are compositionally biased toward basic and acidic residues; that stretch reads SSKKEDSHIGKDE. A phosphoserine mark is found at Ser321, Ser323, and Ser344. Basic and acidic residues-rich tracts occupy residues 335–400, 421–432, 439–467, and 479–528; these read RSHD…ERER, RSERSHYYDSDR, PYRE…EYKK, and SYRD…EAIK. Lys359 is covalently cross-linked (Glycyl lysine isopeptide (Lys-Gly) (interchain with G-Cter in SUMO2)). Ser422 carries the post-translational modification Phosphoserine. Phosphoserine occurs at positions 532, 614, and 624. Residues 616–625 are compositionally biased toward polar residues; the sequence is APSNRLNDSP. Thr626 carries the post-translational modification Phosphothreonine. Lys637 participates in a covalent cross-link: Glycyl lysine isopeptide (Lys-Gly) (interchain with G-Cter in SUMO2). Phosphoserine occurs at positions 698, 708, 744, and 754. Lys776 participates in a covalent cross-link: Glycyl lysine isopeptide (Lys-Gly) (interchain with G-Cter in SUMO2). 5 disordered regions span residues 964–995, 1036–1101, 1133–1233, 1264–1352, and 1393–1443; these read EEGN…TSDD, EDYS…SDHW, LHKG…LGKT, QEKP…FSDQ, and LEKN…PGSA. Residues 971–994 are compositionally biased toward basic and acidic residues; sequence PERRGRPEISLDERGEGGHVHTSD. Residues 1045–1058 show a composition bias toward acidic residues; it reads SNDESDSEDTDSDD. Over residues 1084–1095 the composition is skewed to low complexity; sequence SPCSSRSSQSYR. Phosphoserine is present on Ser1098. Polar residues predominate over residues 1162–1171; it reads HPQSDGVDST. Positions 1172–1191 are enriched in basic and acidic residues; sequence SHTDVKSDPLGHPNSEETVK. Polar residues predominate over residues 1215–1225; the sequence is KSWQQTTFQNR. A Phosphoserine modification is found at Ser1228. Polar residues predominate over residues 1265–1276; sequence EKPSTTYQQPDS. Positions 1393-1403 are enriched in basic and acidic residues; the sequence is LEKNDIKDRGP. Phosphoserine is present on residues Ser1413, Ser1415, and Ser1417. The interaction with TUBA1A stretch occupies residues 1418–1714; sequence DGELQDRKKV…KKERSRKKDS (297 aa). Residues 1421-1431 are compositionally biased toward basic and acidic residues; that stretch reads LQDRKKVRVEV. The AWS domain maps to 1494 to 1548; the sequence is IKRMQCECTPLSKDERAQGEIACGEDCLNRLLMIECSSRCPNGDYCSNRRFQRKQ. Residues Cys1499, Cys1501, Cys1516, Cys1520, Cys1529, Cys1533, and Cys1539 each contribute to the Zn(2+) site. Positions 1550–1667 constitute an SET domain; it reads ADVEVILTEK…SGSELTFDYQ (118 aa). S-adenosyl-L-methionine-binding positions include 1560 to 1562, 1603 to 1605, and 1628 to 1629; these read KGW, HYY, and NH. Cys1631 contributes to the Zn(2+) binding site. A Post-SET domain is found at 1674 to 1690; it reads EAQKCFCGSANCRGYLG. Gln1676 is a binding site for S-adenosyl-L-methionine. Residue Cys1678 participates in Zn(2+) binding. Residue Phe1679 coordinates S-adenosyl-L-methionine. Zn(2+)-binding residues include Cys1680 and Cys1685. Ser1696, Ser1844, and Ser1845 each carry phosphoserine. Residues 1831-1872 form a disordered region; it reads KTAVPPLSEGDGYSSENTSRAHTPLNTPDPSTKLSTEADTDT. Over residues 1844–1867 the composition is skewed to polar residues; the sequence is SSENTSRAHTPLNTPDPSTKLSTE. Phosphothreonine is present on residues Thr1853 and Thr1872. Residue Ser1888 is modified to Phosphoserine. The segment at 1921–2142 is disordered; sequence EELQSQQLLP…EAQKQQQQMQ (222 aa). Low complexity predominate over residues 1924-1935; sequence QSQQLLPQQLPE. At Ser1952 the chain carries Phosphoserine. The segment covering 1960 to 1972 has biased composition (basic and acidic residues); the sequence is IEPKESNGTKLEE. A compositionally biased stretch (acidic residues) spans 1973-1990; that stretch reads PINEETPSQDEEEGVSDV. Phosphoserine occurs at positions 1980, 1988, and 1995. Basic and acidic residues-rich tracts occupy residues 1991 to 2004, 2014 to 2046, and 2059 to 2072; these read ESER…KTVD, DSWK…DAVG, and RSRE…TQNK. 2 positions are modified to phosphoserine: Ser2080 and Ser2082. Basic and acidic residues-rich tracts occupy residues 2090–2100 and 2111–2135; these read RGTKRPDDRYD and KDRN…REAQ. Positions 2117-2146 form a coiled coil; it reads STEERRKLFEQEVAQREAQKQQQQMQNLGM. The low charge region stretch occupies residues 2137–2366; the sequence is QQQQMQNLGM…APGQPQPLQP (230 aa). One can recognise a WW domain in the interval 2389–2422; that stretch reads IVLPPNWKTARDPEGKIYYYHVITRQTQWDPPTW. The interval 2439–2465 is disordered; it reads LGTPTYDENPMKASKKPKTAEADTSSE. Residues 2457–2564 form an interaction with POLR2A region; the sequence is TAEADTSSEL…YKPKEDTELE (108 aa).

This sequence belongs to the class V-like SAM-binding methyltransferase superfamily. Histone-lysine methyltransferase family. SET2 subfamily. As to quaternary structure, specifically interacts with hyperphosphorylated C-terminal domain (CTD) of RNA polymerase II large subunit (POLR2A): binds to CTD heptad repeats doubly phosphorylated on 'Ser-2' and 'Ser-5' of each heptad. Interacts with HTT. Interacts with IWS1. Interacts with p53/TP53; leading to regulate p53/TP53 target genes. Component of a complex with HNRNPL. Interacts with TUBA1A; the interaction is independent on alpha-tubulin acetylation on 'Lys-40'. Interacts with STAT1. May be automethylated. As to expression, ubiquitously expressed.

The protein localises to the nucleus. The protein resides in the chromosome. The catalysed reaction is L-lysyl(36)-[histone H3] + 3 S-adenosyl-L-methionine = N(6),N(6),N(6)-trimethyl-L-lysyl(36)-[histone H3] + 3 S-adenosyl-L-homocysteine + 3 H(+). It carries out the reaction L-lysyl-[protein] + S-adenosyl-L-methionine = N(6)-methyl-L-lysyl-[protein] + S-adenosyl-L-homocysteine + H(+). The enzyme catalyses L-lysyl-[protein] + 3 S-adenosyl-L-methionine = N(6),N(6),N(6)-trimethyl-L-lysyl-[protein] + 3 S-adenosyl-L-homocysteine + 3 H(+). With respect to regulation, specifically inhibited by sinefungin derivatives. N-propyl sinefungin (Pr-SNF) interacts preferentially with SETD2. Functionally, histone methyltransferase that specifically trimethylates 'Lys-36' of histone H3 (H3K36me3) using dimethylated 'Lys-36' (H3K36me2) as substrate. It is capable of trimethylating unmethylated H3K36 (H3K36me0) in vitro. Represents the main enzyme generating H3K36me3, a specific tag for epigenetic transcriptional activation. Plays a role in chromatin structure modulation during elongation by coordinating recruitment of the FACT complex and by interacting with hyperphosphorylated POLR2A. Acts as a key regulator of DNA mismatch repair in G1 and early S phase by generating H3K36me3, a mark required to recruit MSH6 subunit of the MutS alpha complex: early recruitment of the MutS alpha complex to chromatin to be replicated allows a quick identification of mismatch DNA to initiate the mismatch repair reaction. Required for DNA double-strand break repair in response to DNA damage: acts by mediating formation of H3K36me3, promoting recruitment of RAD51 and DNA repair via homologous recombination (HR). Acts as a tumor suppressor. H3K36me3 also plays an essential role in the maintenance of a heterochromatic state, by recruiting DNA methyltransferase DNMT3A. H3K36me3 is also enhanced in intron-containing genes, suggesting that SETD2 recruitment is enhanced by splicing and that splicing is coupled to recruitment of elongating RNA polymerase. Required during angiogenesis. Required for endoderm development by promoting embryonic stem cell differentiation toward endoderm: acts by mediating formation of H3K36me3 in distal promoter regions of FGFR3, leading to regulate transcription initiation of FGFR3. In addition to histones, also mediates methylation of other proteins, such as tubulins and STAT1. Trimethylates 'Lys-40' of alpha-tubulins such as TUBA1B (alpha-TubK40me3); alpha-TubK40me3 is required for normal mitosis and cytokinesis and may be a specific tag in cytoskeletal remodeling. Involved in interferon-alpha-induced antiviral defense by mediating both monomethylation of STAT1 at 'Lys-525' and catalyzing H3K36me3 on promoters of some interferon-stimulated genes (ISGs) to activate gene transcription. Its function is as follows. (Microbial infection) Recruited to the promoters of adenovirus 12 E1A gene in case of infection, possibly leading to regulate its expression. In Homo sapiens (Human), this protein is Histone-lysine N-methyltransferase SETD2 (SETD2).